Here is a 714-residue protein sequence, read N- to C-terminus: P-loop NTPase domain-containing protein LPA1 (714 aa).

A compositionally biased stretch (low complexity) spans 1–11 (MPMPPQCASSK). 3 disordered regions span residues 1-42 (MPMP…PPPK), 259-293 (QKLD…PRTE), and 595-689 (FGSE…GSGN). A compositionally biased stretch (basic and acidic residues) spans 271–285 (EGRDDTSDDKAHHGS). Residues 595–617 (FGSEEDADDPPDAGTDEDLTDEE) are compositionally biased toward acidic residues. Positions 618–636 (RDMHEIEAGSVDEHSTKSD) are enriched in basic and acidic residues. Positions 659–670 (AASSTKNSSNQE) are enriched in polar residues.

As to expression, expressed in roots, leaf blade shoots, leaf sheath shoots and panicles.

Functionally, required for the accumulation of phytic acid in seeds. Phytic acid is the primary storage form of phosphorus in cereal grains and other plant seeds. In Oryza sativa subsp. japonica (Rice), this protein is P-loop NTPase domain-containing protein LPA1.